The chain runs to 443 residues: Methylenetetrahydrofolate--tRNA-(uracil-5-)-methyltransferase TrmFO (443 aa).

An FAD-binding site is contributed by 8 to 13; it reads GAGLAG.

This sequence belongs to the MnmG family. TrmFO subfamily. FAD is required as a cofactor.

It is found in the cytoplasm. It carries out the reaction uridine(54) in tRNA + (6R)-5,10-methylene-5,6,7,8-tetrahydrofolate + NADH + H(+) = 5-methyluridine(54) in tRNA + (6S)-5,6,7,8-tetrahydrofolate + NAD(+). The catalysed reaction is uridine(54) in tRNA + (6R)-5,10-methylene-5,6,7,8-tetrahydrofolate + NADPH + H(+) = 5-methyluridine(54) in tRNA + (6S)-5,6,7,8-tetrahydrofolate + NADP(+). In terms of biological role, catalyzes the folate-dependent formation of 5-methyl-uridine at position 54 (M-5-U54) in all tRNAs. The polypeptide is Methylenetetrahydrofolate--tRNA-(uracil-5-)-methyltransferase TrmFO (Thermus thermophilus (strain ATCC 27634 / DSM 579 / HB8)).